Reading from the N-terminus, the 649-residue chain is ATP-dependent DNA helicase Q1 (649 aa).

One can recognise a Helicase ATP-binding domain in the interval 100 to 275 (INVTMAGKEV…QKILCIEKCF (176 aa)). 113 to 120 (MPTGGGKG) lines the ATP pocket. The DEVH box motif lies at 219–222 (DEVH). One can recognise a Helicase C-terminal domain in the interval 300-451 (FIEDIVKLIN…EMVSYCQNIS (152 aa)). Residues C453, C471, C475, and C478 each coordinate Zn(2+). An N6-acetyllysine mark is found at K514 and K522. Phosphoserine is present on residues S597 and S602. Residues 597–608 (SFRVESSQTCHS) show a composition bias toward polar residues. Residues 597 to 649 (SFRVESSQTCHSEQGDKKMEEKNSGNFQKKAANMLQQSGSKNTGAKKRKIDDA) are disordered. Positions 609–619 (EQGDKKMEEKN) are enriched in basic and acidic residues. Positions 630 to 639 (MLQQSGSKNT) are enriched in polar residues. At S634 the chain carries Phosphoserine. The segment covering 640–649 (GAKKRKIDDA) has biased composition (basic residues).

This sequence belongs to the helicase family. RecQ subfamily. In terms of assembly, may form homodimers or higher order oligomers. Interacts with EXO1. Interacts with MLH1. Interacts with PARP1. Mg(2+) serves as cofactor. It depends on Mn(2+) as a cofactor. Requires Zn(2+) as cofactor.

The protein resides in the nucleus. The catalysed reaction is Couples ATP hydrolysis with the unwinding of duplex DNA by translocating in the 3'-5' direction.. It catalyses the reaction ATP + H2O = ADP + phosphate + H(+). The enzyme catalyses dATP + H2O = dADP + phosphate + H(+). Its function is as follows. DNA helicase that plays a role in DNA damage repair and genome stability. Exhibits a magnesium- and ATP-dependent DNA-helicase activity that unwinds single- and double-stranded DNA in a 3'-5' direction. Plays a role in restoring regressed replication forks. Required to restart stalled replication forks induced by abortive topoisomerase 1 and 2 lesions. May play a role in the repair of DNA that is damaged by ultraviolet light or other mutagens. This Pongo abelii (Sumatran orangutan) protein is ATP-dependent DNA helicase Q1 (RECQL).